Reading from the N-terminus, the 382-residue chain is Alcohol dehydrogenase 4 (382 aa).

It belongs to the iron-containing alcohol dehydrogenase family. In terms of assembly, homodimer. Zn(2+) serves as cofactor. The cofactor is Fe(2+).

It localises to the mitochondrion. It carries out the reaction a primary alcohol + NAD(+) = an aldehyde + NADH + H(+). The enzyme catalyses a secondary alcohol + NAD(+) = a ketone + NADH + H(+). Inhibited by EDTA. Its function is as follows. Reduces acetaldehyde to ethanol during glucose fermentation. Specific for ethanol. Shows drastically reduced activity towards primary alcohols from 4 carbon atoms upward. Isomers of aliphatic alcohol, as well as secondary alcohols and glycerol are not used at all. The chain is Alcohol dehydrogenase 4 (ADH4) from Saccharomyces cerevisiae (strain YJM789) (Baker's yeast).